We begin with the raw amino-acid sequence, 364 residues long: MEFEHRPVLLEPTVDALVLPDFGGKGAHRQAGEPGPDAATRLQHGVFVDGTFGRGGHSRALLARLGAQARLVVFDKDPQAIAVARELAAGDGRVEVVHGGFATMAEELTARGIEQVDGVMLDLGVSSPQIDDAERGFSFMRDGPLDMRMDTTRGPTVADWLAQASVDEMREVIADYGEERFAFQVAKAIAACRATRPLHTTLQLAECVAGAVRTREKGQHPATRTFQALRIYINRELEELARALASALDLLGPGGRLAVISFHSLEDRMVKQCIAAAARPAAAHARLPLRESELPQPLVRSLGKVVADDVEVAGNARARSAILRVAERTGEPLPPGGGAGFVKAGRVPGEPVRGTRAGSKGRRR.

Residues 55–57, D75, F101, D122, and Q129 each bind S-adenosyl-L-methionine; that span reads GGH. Positions 333 to 364 are disordered; that stretch reads LPPGGGAGFVKAGRVPGEPVRGTRAGSKGRRR.

It belongs to the methyltransferase superfamily. RsmH family.

Its subcellular location is the cytoplasm. The enzyme catalyses cytidine(1402) in 16S rRNA + S-adenosyl-L-methionine = N(4)-methylcytidine(1402) in 16S rRNA + S-adenosyl-L-homocysteine + H(+). Functionally, specifically methylates the N4 position of cytidine in position 1402 (C1402) of 16S rRNA. This Bordetella bronchiseptica (strain ATCC BAA-588 / NCTC 13252 / RB50) (Alcaligenes bronchisepticus) protein is Ribosomal RNA small subunit methyltransferase H.